Consider the following 82-residue polypeptide: Sulfur carrier protein TusA (82 aa).

Cys19 serves as the catalytic Cysteine persulfide intermediate.

It belongs to the sulfur carrier protein TusA family.

The protein localises to the cytoplasm. Functionally, sulfur carrier protein which probably makes part of a sulfur-relay system. This is Sulfur carrier protein TusA from Tolumonas auensis (strain DSM 9187 / NBRC 110442 / TA 4).